The sequence spans 332 residues: 2-hydroxyacid dehydrogenase homolog 2 (332 aa).

Residues 154-155, 233-235, and Asp-259 contribute to the NAD(+) site; these read KI and TSR. Arg-235 is a catalytic residue. Residue Glu-264 is part of the active site. The Proton donor role is filled by His-296. 296-299 serves as a coordination point for NAD(+); sequence HQAF.

This sequence belongs to the D-isomer specific 2-hydroxyacid dehydrogenase family.

It is found in the cytoplasm. The protein resides in the nucleus. This chain is 2-hydroxyacid dehydrogenase homolog 2, found in Schizosaccharomyces pombe (strain 972 / ATCC 24843) (Fission yeast).